A 505-amino-acid chain; its full sequence is L-carnitine/gamma-butyrobetaine antiporter (505 aa).

The next 12 membrane-spanning stretches (helical) occupy residues Ile10–Val30, Trp51–Phe71, Ile92–Ile112, Gly143–Val163, Phe195–Val215, Leu231–Leu251, Ser263–Met283, Trp316–Ala336, Leu347–Gly367, Leu403–Ile423, Leu446–Leu466, and Ala475–Ile495.

It belongs to the BCCT transporter (TC 2.A.15) family. CaiT subfamily. As to quaternary structure, homotrimer.

The protein localises to the cell inner membrane. It carries out the reaction 4-(trimethylamino)butanoate(in) + (R)-carnitine(out) = 4-(trimethylamino)butanoate(out) + (R)-carnitine(in). It functions in the pathway amine and polyamine metabolism; carnitine metabolism. Functionally, catalyzes the exchange of L-carnitine for gamma-butyrobetaine. In Salmonella agona (strain SL483), this protein is L-carnitine/gamma-butyrobetaine antiporter.